Consider the following 47-residue polypeptide: Large ribosomal subunit protein bL32c (47 aa).

This sequence belongs to the bacterial ribosomal protein bL32 family.

Its subcellular location is the plastid. The polypeptide is Large ribosomal subunit protein bL32c (rpl32) (Prototheca wickerhamii).